Reading from the N-terminus, the 298-residue chain is Tyrosine recombinase XerD (298 aa).

The region spanning 3-88 (SSHNNLLQNF…AIRQFYKFLK (86 aa)) is the Core-binding (CB) domain. Residues 109–292 (SIPDYLTQDE…ANKTLREVHK (184 aa)) enclose the Tyr recombinase domain. Residues Arg-149, Lys-173, His-244, Arg-247, and His-270 contribute to the active site. The O-(3'-phospho-DNA)-tyrosine intermediate role is filled by Tyr-279.

This sequence belongs to the 'phage' integrase family. XerD subfamily. Forms a cyclic heterotetrameric complex composed of two molecules of XerC and two molecules of XerD.

It is found in the cytoplasm. Site-specific tyrosine recombinase, which acts by catalyzing the cutting and rejoining of the recombining DNA molecules. The XerC-XerD complex is essential to convert dimers of the bacterial chromosome into monomers to permit their segregation at cell division. It also contributes to the segregational stability of plasmids. The sequence is that of Tyrosine recombinase XerD from Leptospira interrogans serogroup Icterohaemorrhagiae serovar copenhageni (strain Fiocruz L1-130).